The sequence spans 157 residues: Protein Smg homolog (157 aa).

Belongs to the Smg family.

In Shewanella piezotolerans (strain WP3 / JCM 13877), this protein is Protein Smg homolog.